The chain runs to 214 residues: Putative ankyrin repeat protein R844 (214 aa).

5 ANK repeats span residues 41 to 70 (VEKNMIEHIVENGYLDVLKYIDSLKNQNKF), 81 to 110 (SLDKYLIMSCEFGHLEMTKYFVSQGANVKT), 111 to 140 (DNNMPLRLASQNGHIDTIKYLIENSVDVRA), 142 to 170 (NDCALRMASLFGHINVVKYLVDMGADVTS), and 172 to 200 (NNFAIIHTARSGRLELAKYLAEKGADIRA).

In Acanthamoeba polyphaga mimivirus (APMV), this protein is Putative ankyrin repeat protein R844.